We begin with the raw amino-acid sequence, 346 residues long: S-adenosylmethionine:tRNA ribosyltransferase-isomerase (346 aa).

It belongs to the QueA family. In terms of assembly, monomer.

It is found in the cytoplasm. It carries out the reaction 7-aminomethyl-7-carbaguanosine(34) in tRNA + S-adenosyl-L-methionine = epoxyqueuosine(34) in tRNA + adenine + L-methionine + 2 H(+). It functions in the pathway tRNA modification; tRNA-queuosine biosynthesis. Functionally, transfers and isomerizes the ribose moiety from AdoMet to the 7-aminomethyl group of 7-deazaguanine (preQ1-tRNA) to give epoxyqueuosine (oQ-tRNA). This is S-adenosylmethionine:tRNA ribosyltransferase-isomerase from Neisseria gonorrhoeae (strain ATCC 700825 / FA 1090).